A 76-amino-acid polypeptide reads, in one-letter code: Small ribosomal subunit protein bS18 (76 aa).

It belongs to the bacterial ribosomal protein bS18 family. As to quaternary structure, part of the 30S ribosomal subunit. Forms a tight heterodimer with protein bS6.

Its function is as follows. Binds as a heterodimer with protein bS6 to the central domain of the 16S rRNA, where it helps stabilize the platform of the 30S subunit. This Methylococcus capsulatus (strain ATCC 33009 / NCIMB 11132 / Bath) protein is Small ribosomal subunit protein bS18.